The following is a 234-amino-acid chain: Protein rgg8 (234 aa).

Its subcellular location is the cytoplasm. It is found in the nucleus. The protein is Protein rgg8 (rgg8) of Schizosaccharomyces pombe (strain 972 / ATCC 24843) (Fission yeast).